We begin with the raw amino-acid sequence, 61 residues long: Temporin-CDYa (61 aa).

Positions 1–22 (MFPLKKSLLLLFFLGTINFSFC) are cleaved as a signal peptide. A propeptide spanning residues 23 to 44 (EEERNAEEERRDDPEERDVAME) is cleaved from the precursor. Leu-59 carries the leucine amide modification.

This sequence belongs to the frog skin active peptide (FSAP) family. Temporin subfamily. In terms of tissue distribution, expressed by the skin glands.

The protein resides in the secreted. Functionally, antimicrobial peptide. This chain is Temporin-CDYa, found in Rana dybowskii (Dybovsky's frog).